We begin with the raw amino-acid sequence, 395 residues long: Cysteine synthase 2 (395 aa).

The chain crosses the membrane as a helical span at residues 6 to 22 (QDLASGIAMGAVFMYLL). Lys-83 is subject to N6-(pyridoxal phosphate)lysine. Pyridoxal 5'-phosphate is bound by residues 228–232 (GTGGT) and Ser-335.

The protein belongs to the cysteine synthase/cystathionine beta-synthase family. Pyridoxal 5'-phosphate serves as cofactor.

The protein localises to the mitochondrion. The protein resides in the mitochondrion outer membrane. It catalyses the reaction O-acetyl-L-serine + hydrogen sulfide = L-cysteine + acetate. Functionally, putative cysteine synthase that catalyzes the conversion of O-acetyl-L-serine (OAS) into cysteine, the last step in the cysteine biosynthesis pathway. However, in contrast to cysteine synthase cys11, this CS-like protein seems not to function in cysteine biosynthesis, at least under normal growth conditions, although the transcript is produced. The protein is Cysteine synthase 2 (cys12) of Schizosaccharomyces pombe (strain 972 / ATCC 24843) (Fission yeast).